The primary structure comprises 180 residues: Alkyl hydroperoxide reductase AhpD (180 aa).

Catalysis depends on C131, which acts as the Proton donor. A disulfide bridge links C131 with C134. Catalysis depends on C134, which acts as the Cysteine sulfenic acid (-SOH) intermediate.

This sequence belongs to the AhpD family.

It carries out the reaction N(6)-[(R)-dihydrolipoyl]-L-lysyl-[lipoyl-carrier protein] + a hydroperoxide = N(6)-[(R)-lipoyl]-L-lysyl-[lipoyl-carrier protein] + an alcohol + H2O. Functionally, antioxidant protein with alkyl hydroperoxidase activity. Required for the reduction of the AhpC active site cysteine residues and for the regeneration of the AhpC enzyme activity. The protein is Alkyl hydroperoxide reductase AhpD of Beijerinckia indica subsp. indica (strain ATCC 9039 / DSM 1715 / NCIMB 8712).